The chain runs to 74 residues: Protein krueppel (74 aa).

4 consecutive C2H2-type zinc fingers follow at residues 1-4 (ERTH), 10-32 (FECQ…MRLH), 38-60 (YRCE…LRVH), and 66-74 (YGCEHCSMK).

This sequence belongs to the krueppel C2H2-type zinc-finger protein family.

The protein resides in the nucleus. Krueppel is a gap class segmentation protein. In Tribolium castaneum (Red flour beetle), this protein is Protein krueppel (Kr).